Here is a 130-residue protein sequence, read N- to C-terminus: Small ribosomal subunit protein uS8A (130 aa).

It belongs to the universal ribosomal protein uS8 family. As to quaternary structure, component of the small ribosomal subunit (SSU). Mature ribosomes consist of a small (40S) and a large (60S) subunit. The 40S subunit contains about 32 different proteins and 1 molecule of RNA (18S). The 60S subunit contains 45 different proteins and 3 molecules of RNA (25S, 5.8S and 5S).

It is found in the cytoplasm. Component of the ribosome, a large ribonucleoprotein complex responsible for the synthesis of proteins in the cell. The small ribosomal subunit (SSU) binds messenger RNAs (mRNAs) and translates the encoded message by selecting cognate aminoacyl-transfer RNA (tRNA) molecules. The large subunit (LSU) contains the ribosomal catalytic site termed the peptidyl transferase center (PTC), which catalyzes the formation of peptide bonds, thereby polymerizing the amino acids delivered by tRNAs into a polypeptide chain. The nascent polypeptides leave the ribosome through a tunnel in the LSU and interact with protein factors that function in enzymatic processing, targeting, and the membrane insertion of nascent chains at the exit of the ribosomal tunnel. In Candida albicans (strain SC5314 / ATCC MYA-2876) (Yeast), this protein is Small ribosomal subunit protein uS8A (RPS22A).